The chain runs to 331 residues: uncharacterized protein (331 aa).

An ATP-binding site is contributed by 43–50; the sequence is GANESGKS.

This is an uncharacterized protein from Methanocaldococcus jannaschii (strain ATCC 43067 / DSM 2661 / JAL-1 / JCM 10045 / NBRC 100440) (Methanococcus jannaschii).